The primary structure comprises 225 residues: MRFFMLIGFNLLTALSSFCAAISANNSDNVEHEQEVAEAVAPPSINIEVKYDVVGKESENHDSFLEFYAEDTATLAYNVTNWEDTNITIFGVNGTIVTYPHGYPVADITGASIGPYEMEVNGTSKFGQDVTLNLPEGQYFLIPFLLASRFDEIVRIAAPPTLFEIVSPPISFFNPQFLSVQVIFLAIIGGVSYYYMKSKTNQRPSKKSATVKKVDESWLPETYKK.

Positions 1–24 are cleaved as a signal peptide; the sequence is MRFFMLIGFNLLTALSSFCAAISA. The Lumenal segment spans residues 25 to 169; sequence NNSDNVEHEQ…PTLFEIVSPP (145 aa). Residues 170–190 form a helical membrane-spanning segment; it reads ISFFNPQFLSVQVIFLAIIGG. Topologically, residues 191-225 are cytoplasmic; it reads VSYYYMKSKTNQRPSKKSATVKKVDESWLPETYKK. The tract at residues 203–225 is disordered; sequence RPSKKSATVKKVDESWLPETYKK. Basic and acidic residues predominate over residues 212–225; it reads KKVDESWLPETYKK.

This sequence belongs to the IRC22 family.

It is found in the endoplasmic reticulum membrane. Its function is as follows. Is probably involved in a pathway contributing to genomic integrity. The sequence is that of Increased recombination centers protein 22 (IRC22) from Saccharomyces cerevisiae (strain AWRI1631) (Baker's yeast).